The following is a 334-amino-acid chain: Malate dehydrogenase 2 (334 aa).

NAD(+) is bound at residue 19–25 (IGAGKVG). R100 and R106 together coordinate substrate. NAD(+)-binding positions include N113 and 136-138 (VSN). Substrate-binding residues include N138 and R169. The active-site Proton acceptor is H193.

The protein belongs to the LDH/MDH superfamily.

It carries out the reaction (S)-malate + NAD(+) = oxaloacetate + NADH + H(+). In terms of biological role, catalyzes the reversible oxidation of malate to oxaloacetate. The sequence is that of Malate dehydrogenase 2 from Aquifex aeolicus (strain VF5).